Here is an 896-residue protein sequence, read N- to C-terminus: Probable sodium/sulfate cotransporter 3 (896 aa).

The next 5 helical transmembrane spans lie at 1 to 21 (MAAIGWPGIVAIISVAISFII), 47 to 69 (IITVAKAAAGYGNTGLLTVIFLY), 106 to 126 (VMVLSAFLNNTPCVTFMIPIL), 140 to 160 (LLIPLSYAAVLGGTCTSIGTS), and 186 to 206 (MFDIAPYGVPYALMGFVFIIL). RCK C-terminal domains are found at residues 212 to 296 (LPGN…EFGL), 319 to 404 (TAFH…FKIN), 408 to 493 (LRFV…FPGL), and 499 to 586 (EQVD…KAFV). The next 7 membrane-spanning stretches (helical) occupy residues 602-622 (MAIGVLLVVGMVLTQIVGGLK), 626-646 (YIHLWPAAVLTAALMLLTGCM), 654-674 (AIMWDVYLTIAAAFGVSAALE), 685-705 (AIISIGKSIGGDGPALIAIYV), 734-754 (LKIPAVDISVAIMLGASAGFI), 776-796 (FATIGAPFQIWLMVVASFILC), and 804-824 (VWIATWSITAFIVFVPALLTL). A disordered region spans residues 857–881 (RAQSFGGKAMSVGSTESRTDGSSTP). The span at 868 to 881 (VGSTESRTDGSSTP) shows a compositional bias: polar residues.

This sequence belongs to the divalent anion:Na+ symporter (DASS) superfamily. Na+/sulfate symporter (TC 2.A.47.4) family.

Its subcellular location is the cell membrane. Na(+)/sulfate cotransporter with a probable low-affinity for sulfate. This is Probable sodium/sulfate cotransporter 3 (SLT3) from Chlamydomonas reinhardtii (Chlamydomonas smithii).